The chain runs to 455 residues: Glutamate-1-semialdehyde 2,1-aminomutase (455 aa).

Residue K286 is modified to N6-(pyridoxal phosphate)lysine.

It belongs to the class-III pyridoxal-phosphate-dependent aminotransferase family. HemL subfamily. Homodimer. The cofactor is pyridoxal 5'-phosphate.

It is found in the cytoplasm. It catalyses the reaction (S)-4-amino-5-oxopentanoate = 5-aminolevulinate. The protein operates within porphyrin-containing compound metabolism; protoporphyrin-IX biosynthesis; 5-aminolevulinate from L-glutamyl-tRNA(Glu): step 2/2. The sequence is that of Glutamate-1-semialdehyde 2,1-aminomutase from Clavibacter sepedonicus (Clavibacter michiganensis subsp. sepedonicus).